A 179-amino-acid polypeptide reads, in one-letter code: uncharacterized protein (179 aa).

The tract at residues 27–54 (TAKKSRVQAREARAAVEENKKAQLERDK) is disordered.

This is an uncharacterized protein from Escherichia coli (strain K12).